Reading from the N-terminus, the 157-residue chain is 6,7-dimethyl-8-ribityllumazine synthase (157 aa).

5-amino-6-(D-ribitylamino)uracil contacts are provided by residues Phe22, Ala57–Glu59, and Thr81–Ile83. Residue Gly86–Thr87 participates in (2S)-2-hydroxy-3-oxobutyl phosphate binding. His89 (proton donor) is an active-site residue. Residue Phe114 coordinates 5-amino-6-(D-ribitylamino)uracil. A (2S)-2-hydroxy-3-oxobutyl phosphate-binding site is contributed by Arg128.

Belongs to the DMRL synthase family. As to quaternary structure, forms an icosahedral capsid composed of 60 subunits, arranged as a dodecamer of pentamers.

The enzyme catalyses (2S)-2-hydroxy-3-oxobutyl phosphate + 5-amino-6-(D-ribitylamino)uracil = 6,7-dimethyl-8-(1-D-ribityl)lumazine + phosphate + 2 H2O + H(+). The protein operates within cofactor biosynthesis; riboflavin biosynthesis; riboflavin from 2-hydroxy-3-oxobutyl phosphate and 5-amino-6-(D-ribitylamino)uracil: step 1/2. Its function is as follows. Catalyzes the formation of 6,7-dimethyl-8-ribityllumazine by condensation of 5-amino-6-(D-ribitylamino)uracil with 3,4-dihydroxy-2-butanone 4-phosphate. This is the penultimate step in the biosynthesis of riboflavin. The chain is 6,7-dimethyl-8-ribityllumazine synthase from Histophilus somni (strain 129Pt) (Haemophilus somnus).